The following is a 283-amino-acid chain: MPVSRYAVFGHPVAHSLSPAIHTEFGKQTGIALDYTAIDAPLEDFSAALQRFADEGGKGANVTLPLKEAAYALASSLSDRARLAGAVNTLVRNDGQWQGDNTDGAGLVRDLTERQGLDLRGRRVLLLGAGGAARGVAPALLEAGITAMVVVNRSPERADALCDALGEPARVTSRYIEDLRELGDFELIVNATAAGRDRDAGAFALPLGLVNSLTAAVDLNYGDTAIAFLAWARAAQCRYAIDGLGMLVEQAAESFALWHGVRPDTDPVYAALRAREAVLVSAD.

Residues 16-18 (SLS) and Thr-63 each bind shikimate. The Proton acceptor role is filled by Lys-67. Asp-79 contacts NADP(+). The shikimate site is built by Asn-88 and Asp-103. Residues 128–132 (GAGGA) and Gly-243 each bind NADP(+).

This sequence belongs to the shikimate dehydrogenase family. In terms of assembly, homodimer.

It carries out the reaction shikimate + NADP(+) = 3-dehydroshikimate + NADPH + H(+). It functions in the pathway metabolic intermediate biosynthesis; chorismate biosynthesis; chorismate from D-erythrose 4-phosphate and phosphoenolpyruvate: step 4/7. In terms of biological role, involved in the biosynthesis of the chorismate, which leads to the biosynthesis of aromatic amino acids. Catalyzes the reversible NADPH linked reduction of 3-dehydroshikimate (DHSA) to yield shikimate (SA). This is Shikimate dehydrogenase (NADP(+)) from Xanthomonas euvesicatoria pv. vesicatoria (strain 85-10) (Xanthomonas campestris pv. vesicatoria).